The chain runs to 585 residues: Zinc finger protein 496 (585 aa).

The segment at 1–41 (MPTALCPRVLAPKESEEPRKMRSPPGENPSPQGEPPSPESS) is disordered. Over residues 11–20 (APKESEEPRK) the composition is skewed to basic and acidic residues. A Glycyl lysine isopeptide (Lys-Gly) (interchain with G-Cter in SUMO2) cross-link involves residue K13. Over residues 26–38 (GENPSPQGEPPSP) the composition is skewed to pro residues. The 83-residue stretch at 42 to 124 (RRLFRRFRYQ…AAVEALEREP (83 aa)) folds into the SCAN box domain. Positions 141–167 (DDGDGPAAPQDLEQERMSAESQSYPDA) are disordered. S182 is modified (phosphoserine). In terms of domain architecture, KRAB spans 220 to 294 (SPFKDMILCF…DLQDKEIPQA (75 aa)). A disordered region spans residues 358 to 397 (SSSGDEDSQHSPYCTEELRSPPEDLHSVPAHQSNASAEGE). A compositionally biased stretch (basic and acidic residues) spans 373–383 (EELRSPPEDLH). Residues 387-397 (AHQSNASAEGE) are compositionally biased toward polar residues. The C2H2-type 1; degenerate zinc finger occupies 405–427 (YVCPNCGKIFRWRVNFIRHLRSR). 2 consecutive C2H2-type zinc fingers follow at residues 433–455 (HKCSVCGELFSDSEDLDGHLETH) and 461–483 (YRCTACGKSFRLNSHLISHRRIH). The disordered stretch occupies residues 483 to 506 (HLQPASQQPMKKSEEEALETEGTG). A Glycyl lysine isopeptide (Lys-Gly) (interchain with G-Cter in SUMO2) cross-link involves residue K494. C2H2-type zinc fingers lie at residues 520 to 543 (FQCGDCEKSFQRHDHLVRHRRHCH) and 551 to 573 (FQCRYCVKTFRQNYDLLRHERLH). The short motif at 575–579 (KRRSK) is the Nuclear localization signal element.

This sequence belongs to the krueppel C2H2-type zinc-finger protein family. As to quaternary structure, interacts (via zinc-fingers) with JARID2. Interacts with NSD1.

The protein resides in the nucleus. In terms of biological role, DNA-binding transcription factor that can both act as an activator and a repressor. The protein is Zinc finger protein 496 (Znf496) of Mus musculus (Mouse).